Consider the following 405-residue polypeptide: Diaminohydroxyphosphoribosylamino-pyrimidine deaminase (405 aa).

The CMP/dCMP-type deaminase domain maps to 256 to 383 (YNHEEYMLKA…DLLKKAGIVV (128 aa)). His-305 lines the Zn(2+) pocket. Glu-307 serves as the catalytic Proton donor. Zn(2+) contacts are provided by Cys-335 and Cys-345.

The protein belongs to the cytidine and deoxycytidylate deaminase family. The cofactor is Zn(2+).

It is found in the cytoplasm. Its subcellular location is the nucleus. It catalyses the reaction 2,5-diamino-6-hydroxy-4-(5-phosphoribosylamino)-pyrimidine + H2O + H(+) = 5-amino-6-(5-phospho-D-ribosylamino)uracil + NH4(+). The protein operates within cofactor biosynthesis; riboflavin biosynthesis; 5-amino-6-(D-ribitylamino)uracil from GTP: step 2/4. In terms of biological role, involved in riboflavin biosynthesis. Converts 2,5-diamino-6-(ribosylamino)-4(3H)-pyrimidinone 5'-phosphate into 5-amino-6-(ribosylamino)-2,4(1H,3H)-pyrimidinedione 5'-phosphate. The polypeptide is Diaminohydroxyphosphoribosylamino-pyrimidine deaminase (Schizosaccharomyces pombe (strain 972 / ATCC 24843) (Fission yeast)).